The chain runs to 178 residues: ATP synthase subunit delta (178 aa).

This sequence belongs to the ATPase delta chain family. F-type ATPases have 2 components, F(1) - the catalytic core - and F(0) - the membrane proton channel. F(1) has five subunits: alpha(3), beta(3), gamma(1), delta(1), epsilon(1). F(0) has three main subunits: a(1), b(2) and c(10-14). The alpha and beta chains form an alternating ring which encloses part of the gamma chain. F(1) is attached to F(0) by a central stalk formed by the gamma and epsilon chains, while a peripheral stalk is formed by the delta and b chains.

Its subcellular location is the cell membrane. F(1)F(0) ATP synthase produces ATP from ADP in the presence of a proton or sodium gradient. F-type ATPases consist of two structural domains, F(1) containing the extramembraneous catalytic core and F(0) containing the membrane proton channel, linked together by a central stalk and a peripheral stalk. During catalysis, ATP synthesis in the catalytic domain of F(1) is coupled via a rotary mechanism of the central stalk subunits to proton translocation. Its function is as follows. This protein is part of the stalk that links CF(0) to CF(1). It either transmits conformational changes from CF(0) to CF(1) or is implicated in proton conduction. In Geobacillus sp. (strain WCH70), this protein is ATP synthase subunit delta.